Here is a 349-residue protein sequence, read N- to C-terminus: AA9 family lytic polysaccharide monooxygenase C (349 aa).

Positions 1–19 (MKSTFGLLALAAAAKLVSA) are cleaved as a signal peptide. 2 residues coordinate Cu(2+): His-20 and His-102. Cys-62 and Cys-183 are oxidised to a cystine. Residue His-169 participates in O2 binding. Residue Tyr-180 coordinates Cu(2+). A disordered region spans residues 233 to 304 (DGSSSGSSGS…SGSNSGSDSC (72 aa)). 2 stretches are compositionally biased toward low complexity: residues 234 to 262 (GSSS…AAPT) and 269 to 304 (TSAT…SDSC). The 37-residue stretch at 311–347 (GSVKIYGQCGGQNYSGPTSCEAGLICKEWNPYYHQCV) folds into the CBM1 domain. Cystine bridges form between Cys-319/Cys-336 and Cys-330/Cys-346. The N-linked (GlcNAc...) asparagine glycan is linked to Asn-323.

This sequence belongs to the polysaccharide monooxygenase AA9 family. It depends on Cu(2+) as a cofactor.

The protein localises to the secreted. The catalysed reaction is [(1-&gt;4)-beta-D-glucosyl]n+m + reduced acceptor + O2 = 4-dehydro-beta-D-glucosyl-[(1-&gt;4)-beta-D-glucosyl]n-1 + [(1-&gt;4)-beta-D-glucosyl]m + acceptor + H2O.. Its function is as follows. Lytic polysaccharide monooxygenase (LPMO) that depolymerizes crystalline and amorphous polysaccharides via the oxidation of scissile alpha- or beta-(1-4)-glycosidic bonds, yielding C4 oxidation products. Catalysis by LPMOs requires the reduction of the active-site copper from Cu(II) to Cu(I) by a reducing agent and H(2)O(2) or O(2) as a cosubstrate. Active on cellulose and cello-oligosaccharides, as well as plant cell wall-derived hemicellulosic polysaccharides. Also active on cello-oligosaccharides such as cellohexaose, cellopentaose or cellotetraose. The protein is AA9 family lytic polysaccharide monooxygenase C of Aspergillus fumigatus (strain ATCC MYA-4609 / CBS 101355 / FGSC A1100 / Af293) (Neosartorya fumigata).